We begin with the raw amino-acid sequence, 110 residues long: Ribonuclease P protein component 4 (110 aa).

Residues Cys65, Cys68, Cys94, and Cys97 each contribute to the Zn(2+) site.

It belongs to the eukaryotic/archaeal RNase P protein component 4 family. Consists of a catalytic RNA component and at least 4-5 protein subunits. Zn(2+) is required as a cofactor.

The protein localises to the cytoplasm. It catalyses the reaction Endonucleolytic cleavage of RNA, removing 5'-extranucleotides from tRNA precursor.. Functionally, part of ribonuclease P, a protein complex that generates mature tRNA molecules by cleaving their 5'-ends. The protein is Ribonuclease P protein component 4 of Methanococcus maripaludis (strain C7 / ATCC BAA-1331).